Reading from the N-terminus, the 363-residue chain is Aspartate-semialdehyde dehydrogenase (363 aa).

NADP(+)-binding residues include threonine 15, glycine 16, serine 17, valine 18, serine 40, serine 43, and leucine 87. The Acyl-thioester intermediate role is filled by cysteine 154. NADP(+) is bound at residue glycine 186. Histidine 251 functions as the Proton acceptor in the catalytic mechanism. Asparagine 341 contacts NADP(+).

The protein belongs to the aspartate-semialdehyde dehydrogenase family. Homotetramer; dimer of dimers.

Its subcellular location is the cytoplasm. It localises to the cytosol. The protein localises to the nucleus. The catalysed reaction is L-aspartate 4-semialdehyde + phosphate + NADP(+) = 4-phospho-L-aspartate + NADPH + H(+). It participates in amino-acid biosynthesis; L-methionine biosynthesis via de novo pathway; L-homoserine from L-aspartate: step 2/3. The protein operates within amino-acid biosynthesis; L-threonine biosynthesis; L-threonine from L-aspartate: step 2/5. Its activity is regulated as follows. Inhibited by 4-amino-3-hydroxynaphthalene-1-sulfonic acid and the competitive inhibitor 1,4-benzoquinone and derivates such as 2-chloro-3-methoxy-1,4-naphthoquinone, 2,3-dichloro-1,4-naphthoquinone, 2-chloro-1,4-naphthoquinone, 2-bromo-1,4-naphthoquinone and 2,3-dichloro-5,8-dihydroxy-1,4-naphthoquinone. Functionally, catalyzes the NADPH-dependent formation of L-aspartate 4-semialdehyde (L-ASA) by the reductive dephosphorylation of 4-phospho-L-aspartate. Mediates the second step in the biosynthesis of amino acids that derive from aspartate (the aspartate family of amino acids), including methioinine and threonine, the latter of which is a precursor to isoleucine. The polypeptide is Aspartate-semialdehyde dehydrogenase (Aspergillus fumigatus (strain ATCC MYA-4609 / CBS 101355 / FGSC A1100 / Af293) (Neosartorya fumigata)).